We begin with the raw amino-acid sequence, 527 residues long: Glutamate--cysteine ligase (527 aa).

This sequence belongs to the glutamate--cysteine ligase type 1 family. Type 1 subfamily.

It carries out the reaction L-cysteine + L-glutamate + ATP = gamma-L-glutamyl-L-cysteine + ADP + phosphate + H(+). The protein operates within sulfur metabolism; glutathione biosynthesis; glutathione from L-cysteine and L-glutamate: step 1/2. The protein is Glutamate--cysteine ligase of Pseudomonas paraeruginosa (strain DSM 24068 / PA7) (Pseudomonas aeruginosa (strain PA7)).